Here is a 1058-residue protein sequence, read N- to C-terminus: Carbamoyl phosphate synthase large chain (1058 aa).

The interval 1 to 401 is carboxyphosphate synthetic domain; that stretch reads MPKRTDIQKI…SLLKACRSLE (401 aa). The ATP site is built by arginine 129, arginine 169, glycine 175, glycine 176, arginine 208, isoleucine 210, glutamate 215, glycine 241, isoleucine 242, histidine 243, glutamine 284, and glutamate 298. An ATP-grasp 1 domain is found at 133–327; it reads KQLMEELEQP…IAKLAAKIAV (195 aa). 3 residues coordinate Mg(2+): glutamine 284, glutamate 298, and asparagine 300. 3 residues coordinate Mn(2+): glutamine 284, glutamate 298, and asparagine 300. The oligomerization domain stretch occupies residues 402–546; that stretch reads IGVHHNEIPE…YSTYGWENES (145 aa). The carbamoyl phosphate synthetic domain stretch occupies residues 547–929; the sequence is IRSDKESVLV…ALYKAFEASY (383 aa). The 191-residue stretch at 671 to 861 folds into the ATP-grasp 2 domain; sequence EQALKELDIP…MAQVATKLIL (191 aa). Residues arginine 707, serine 746, isoleucine 748, glutamate 752, glycine 777, valine 778, histidine 779, serine 780, glutamine 820, and glutamate 832 each coordinate ATP. Residues glutamine 820, glutamate 832, and asparagine 834 each coordinate Mg(2+). Positions 820, 832, and 834 each coordinate Mn(2+). Positions 930 to 1058 constitute an MGS-like domain; that stretch reads LHLPTFGNVV…ESRSFVTEAI (129 aa). Positions 930–1058 are allosteric domain; that stretch reads LHLPTFGNVV…ESRSFVTEAI (129 aa).

The protein belongs to the CarB family. In terms of assembly, composed of two chains; the small (or glutamine) chain promotes the hydrolysis of glutamine to ammonia, which is used by the large (or ammonia) chain to synthesize carbamoyl phosphate. Tetramer of heterodimers (alpha,beta)4. Mg(2+) serves as cofactor. The cofactor is Mn(2+).

The enzyme catalyses hydrogencarbonate + L-glutamine + 2 ATP + H2O = carbamoyl phosphate + L-glutamate + 2 ADP + phosphate + 2 H(+). It catalyses the reaction hydrogencarbonate + NH4(+) + 2 ATP = carbamoyl phosphate + 2 ADP + phosphate + 2 H(+). Its pathway is amino-acid biosynthesis; L-arginine biosynthesis; carbamoyl phosphate from bicarbonate: step 1/1. It participates in pyrimidine metabolism; UMP biosynthesis via de novo pathway; (S)-dihydroorotate from bicarbonate: step 1/3. Large subunit of the glutamine-dependent carbamoyl phosphate synthetase (CPSase). CPSase catalyzes the formation of carbamoyl phosphate from the ammonia moiety of glutamine, carbonate, and phosphate donated by ATP, constituting the first step of 2 biosynthetic pathways, one leading to arginine and/or urea and the other to pyrimidine nucleotides. The large subunit (synthetase) binds the substrates ammonia (free or transferred from glutamine from the small subunit), hydrogencarbonate and ATP and carries out an ATP-coupled ligase reaction, activating hydrogencarbonate by forming carboxy phosphate which reacts with ammonia to form carbamoyl phosphate. This is Carbamoyl phosphate synthase large chain from Streptococcus pneumoniae (strain ATCC BAA-255 / R6).